Here is an 883-residue protein sequence, read N- to C-terminus: Alanine--tRNA ligase (883 aa).

Histidine 563, histidine 567, cysteine 677, and histidine 681 together coordinate Zn(2+).

This sequence belongs to the class-II aminoacyl-tRNA synthetase family. Zn(2+) serves as cofactor.

The protein localises to the cytoplasm. It carries out the reaction tRNA(Ala) + L-alanine + ATP = L-alanyl-tRNA(Ala) + AMP + diphosphate. Functionally, catalyzes the attachment of alanine to tRNA(Ala) in a two-step reaction: alanine is first activated by ATP to form Ala-AMP and then transferred to the acceptor end of tRNA(Ala). Also edits incorrectly charged Ser-tRNA(Ala) and Gly-tRNA(Ala) via its editing domain. The sequence is that of Alanine--tRNA ligase from Cereibacter sphaeroides (strain ATCC 17023 / DSM 158 / JCM 6121 / CCUG 31486 / LMG 2827 / NBRC 12203 / NCIMB 8253 / ATH 2.4.1.) (Rhodobacter sphaeroides).